The following is a 305-amino-acid chain: MDSGSRVNVNIQGTRVLKNKLGKIPDIDISTDGKYLLSASTNDVLLVWDLHTSNKVAFFEAPSVWIMTCAFSPSTKSIAAGGLNNFCVVYDTSVPDADPVELVGHAGFVSCCKYVDDGHLLTGSGDKTCMFWDIEQAKAISVLKGHEMDIVSLDFLPSNPNLFVTGGCDKLAKLWDLRAAYCCATFPGNTSDINSISFFPSNADFVTGAEDGIARCFDIRASAEIFQYSSPSSSPINSVLFSKSGKLLFIAKDKTCEVWDSISSKTITSLTGHENRISSLALTSDGTMLATGSWDECVRLWSSSG.

7 WD repeats span residues 19 to 49, 61 to 91, 104 to 133, 145 to 176, 188 to 218, 231 to 260, and 272 to 302; these read NKLGKIPDIDISTDGKYLLSASTNDVLLVWD, APSVWIMTCAFSPSTKSIAAGGLNNFCVVYD, GHAGFVSCCKYVDDGHLLTGSGDKTCMFWD, GHEMDIVSLDFLPSNPNLFVTGGCDKLAKLWD, GNTSDINSISFFPSNADFVTGAEDGIARCFD, PSSSPINSVLFSKSGKLLFIAKDKTCEVWD, and GHENRISSLALTSDGTMLATGSWDECVRLWS.

This sequence belongs to the WD repeat G protein beta family. As to quaternary structure, g proteins are composed of 3 units, alpha, beta and gamma. Binding of the beta-gamma subunit complex (git5-git11) to the alpha subunit (gpa2) facilitates interaction with GPCR git3.

It localises to the cell membrane. The protein localises to the cytoplasm. It is found in the nucleus. Functionally, beta subunit of the heterotrimeric guanine nucleotide-binding protein (G protein) involved in glucose-induced cAMP signaling. The beta-gamma subunits (git5-git11) promote binding of the alpha subunit gpa2 to GPCR git3, which senses extracellular glucose, to activate cAMP-PKA signaling and repress sexual development and gluconeogenesis. The sequence is that of Guanine nucleotide-binding protein subunit beta (git5) from Schizosaccharomyces pombe (strain 972 / ATCC 24843) (Fission yeast).